The following is a 369-amino-acid chain: Core histone macro-H2A.1 (369 aa).

Residues Lys7 and Lys9 each carry the N6-lactoyllysine; alternate modification. A Histone H2A domain is found at 15 to 90 (RSAKAGVIFP…ILLAVANDEE (76 aa)). At Lys18 the chain carries N6-methyllysine. An N6-acetyllysine; alternate modification is found at Lys116. Lys116 participates in a covalent cross-link: Glycyl lysine isopeptide (Lys-Gly) (interchain with G-Cter in ubiquitin); alternate. Residue Lys117 forms a Glycyl lysine isopeptide (Lys-Gly) (interchain with G-Cter in ubiquitin) linkage. Lys123 bears the N6-acetyllysine; alternate mark. Position 123 is an N6,N6-dimethyllysine; alternate (Lys123). Residue Lys123 forms a Glycyl lysine isopeptide (Lys-Gly) (interchain with G-Cter in SUMO2); alternate linkage. The tract at residues 128–180 (ITPPPAKKAKSPSQKKTVSKKTGGKKGARKSKKKQGEVSKSASADSTTEGTPA) is disordered. Thr129 carries the phosphothreonine modification. Over residues 144–160 (TVSKKTGGKKGARKSKK) the composition is skewed to basic residues. Residues 165-177 (VSKSASADSTTEG) show a composition bias toward polar residues. Lys167 participates in a covalent cross-link: Glycyl lysine isopeptide (Lys-Gly) (interchain with G-Cter in SUMO2). 2 positions are modified to phosphoserine: Ser170 and Ser173. Phosphothreonine is present on Thr178. A Macro domain is found at 184–367 (TVLSTKSLFL…IYVQEMAKLD (184 aa)). Lys189 is covalently cross-linked (Glycyl lysine isopeptide (Lys-Gly) (interchain with G-Cter in SUMO2)). A glycoprotein-binding residues include Asp203, Ile204, Val226, Ser275, Gly312, Ser313, Gly314, and Asn316. A Glycyl lysine isopeptide (Lys-Gly) (interchain with G-Cter in SUMO2) cross-link involves residue Lys320.

The protein belongs to the histone H2A family. The nucleosome is a histone octamer containing two molecules each of H2A, H2B, H3 and H4 assembled in one H3-H4 heterotetramer and two H2A-H2B heterodimers. ADP-ribosylated. Post-translationally, monoubiquitinated at either Lys-116 or Lys-117. May also be polyubiquitinated. Ubiquitination is mediated by the CUL3/SPOP E3 complex and does not promote proteasomal degradation. Instead, it is required for enrichment in inactive X chromosome chromatin. As to expression, present in liver (at protein level).

Its subcellular location is the nucleus. It is found in the chromosome. In terms of biological role, variant histone H2A which replaces conventional H2A in a subset of nucleosomes where it represses transcription. Nucleosomes wrap and compact DNA into chromatin, limiting DNA accessibility to the cellular machineries which require DNA as a template. Histones thereby play a central role in transcription regulation, DNA repair, DNA replication and chromosomal stability. DNA accessibility is regulated via a complex set of post-translational modifications of histones, also called histone code, and nucleosome remodeling. Functionally, isoform that specifically binds poly-ADP-ribose and O-acetyl-ADP-ribose and plays a key role in NAD(+) metabolism. Able to bind to the ends of poly-ADP-ribose chains created by PARP1 and cap them. This prevents PARP1 from further addition of ADP-ribose and thus limits the consumption of nuclear NAD(+), allowing the cell to maintain proper NAD(+) levels in both the nucleus and the mitochondria to promote proper mitochondrial respiration. In contrast to isoform 1, does not bind poly-ADP-ribose. The polypeptide is Core histone macro-H2A.1 (Gallus gallus (Chicken)).